Here is a 206-residue protein sequence, read N- to C-terminus: VEL1-related protein SCY_5430 (206 aa).

The N-terminal stretch at 1–19 (MSFLNIFTFFSVLVSVATA) is a signal peptide.

Belongs to the VEL1 family.

It is found in the cytoplasm. It localises to the cytosol. The sequence is that of VEL1-related protein SCY_5430 from Saccharomyces cerevisiae (strain YJM789) (Baker's yeast).